A 110-amino-acid chain; its full sequence is Protein NATD1 (110 aa).

The region spanning 19–109 (EHDKKRRQFS…PHPQYLERIL (91 aa)) is the N-acetyltransferase domain.

It belongs to the NATD1 family.

The polypeptide is Protein NATD1 (natd1) (Danio rerio (Zebrafish)).